Consider the following 140-residue polypeptide: Nucleoside diphosphate kinase (140 aa).

ATP-binding residues include Lys-11, Phe-59, Arg-87, Thr-93, Arg-104, and Asn-114. His-117 functions as the Pros-phosphohistidine intermediate in the catalytic mechanism.

Belongs to the NDK family. Homotetramer. It depends on Mg(2+) as a cofactor.

It localises to the cytoplasm. It carries out the reaction a 2'-deoxyribonucleoside 5'-diphosphate + ATP = a 2'-deoxyribonucleoside 5'-triphosphate + ADP. The enzyme catalyses a ribonucleoside 5'-diphosphate + ATP = a ribonucleoside 5'-triphosphate + ADP. Major role in the synthesis of nucleoside triphosphates other than ATP. The ATP gamma phosphate is transferred to the NDP beta phosphate via a ping-pong mechanism, using a phosphorylated active-site intermediate. In Agrobacterium fabrum (strain C58 / ATCC 33970) (Agrobacterium tumefaciens (strain C58)), this protein is Nucleoside diphosphate kinase.